Here is a 411-residue protein sequence, read N- to C-terminus: Serine hydroxymethyltransferase (411 aa).

(6S)-5,6,7,8-tetrahydrofolate is bound by residues leucine 119 and glycine 123–leucine 125. An N6-(pyridoxal phosphate)lysine modification is found at lysine 228. Serine 351 to phenylalanine 353 serves as a coordination point for (6S)-5,6,7,8-tetrahydrofolate.

The protein belongs to the SHMT family. In terms of assembly, homodimer. Pyridoxal 5'-phosphate is required as a cofactor.

Its subcellular location is the cytoplasm. The catalysed reaction is (6R)-5,10-methylene-5,6,7,8-tetrahydrofolate + glycine + H2O = (6S)-5,6,7,8-tetrahydrofolate + L-serine. It functions in the pathway one-carbon metabolism; tetrahydrofolate interconversion. The protein operates within amino-acid biosynthesis; glycine biosynthesis; glycine from L-serine: step 1/1. In terms of biological role, catalyzes the reversible interconversion of serine and glycine with tetrahydrofolate (THF) serving as the one-carbon carrier. This reaction serves as the major source of one-carbon groups required for the biosynthesis of purines, thymidylate, methionine, and other important biomolecules. Also exhibits THF-independent aldolase activity toward beta-hydroxyamino acids, producing glycine and aldehydes, via a retro-aldol mechanism. This Clostridium beijerinckii (strain ATCC 51743 / NCIMB 8052) (Clostridium acetobutylicum) protein is Serine hydroxymethyltransferase.